Reading from the N-terminus, the 354-residue chain is Uroporphyrinogen decarboxylase (354 aa).

Residues 27-31 (RQAGR), Asp-77, Tyr-154, Thr-209, and His-327 each bind substrate.

Belongs to the uroporphyrinogen decarboxylase family. As to quaternary structure, homodimer.

The protein resides in the cytoplasm. The catalysed reaction is uroporphyrinogen III + 4 H(+) = coproporphyrinogen III + 4 CO2. Its pathway is porphyrin-containing compound metabolism; protoporphyrin-IX biosynthesis; coproporphyrinogen-III from 5-aminolevulinate: step 4/4. In terms of biological role, catalyzes the decarboxylation of four acetate groups of uroporphyrinogen-III to yield coproporphyrinogen-III. This Actinobacillus succinogenes (strain ATCC 55618 / DSM 22257 / CCUG 43843 / 130Z) protein is Uroporphyrinogen decarboxylase.